A 341-amino-acid polypeptide reads, in one-letter code: Glyceraldehyde-3-phosphate dehydrogenase 2 (341 aa).

Residues 13 to 14 (RI), D35, and R85 contribute to the NAD(+) site. D-glyceraldehyde 3-phosphate contacts are provided by residues 157-159 (SCT), T188, 217-218 (TG), and R240. Catalysis depends on C158, which acts as the Nucleophile. N322 contributes to the NAD(+) binding site.

The protein belongs to the glyceraldehyde-3-phosphate dehydrogenase family. As to quaternary structure, homotetramer.

It localises to the cytoplasm. It catalyses the reaction D-glyceraldehyde 3-phosphate + phosphate + NAD(+) = (2R)-3-phospho-glyceroyl phosphate + NADH + H(+). It participates in carbohydrate degradation; glycolysis; pyruvate from D-glyceraldehyde 3-phosphate: step 1/5. This chain is Glyceraldehyde-3-phosphate dehydrogenase 2 (gpd-2), found in Caenorhabditis elegans.